We begin with the raw amino-acid sequence, 333 residues long: NADH-ubiquinone oxidoreductase chain 2 (333 aa).

10 helical membrane-spanning segments follow: residues 10 to 30, 57 to 77, 91 to 111, 121 to 141, 143 to 163, 170 to 190, 192 to 212, 242 to 262, 267 to 287, and 313 to 333; these read WFIY…NIFI, LIYY…IIVY, FMVQ…FWMI, QIFL…VSMT, INSW…FYAN, KLLA…LELN, NMFI…ISFL, MYPI…MVSV, WILF…IIIL, and SYFA…LNFL.

The protein belongs to the complex I subunit 2 family.

It localises to the mitochondrion inner membrane. The catalysed reaction is a ubiquinone + NADH + 5 H(+)(in) = a ubiquinol + NAD(+) + 4 H(+)(out). In terms of biological role, core subunit of the mitochondrial membrane respiratory chain NADH dehydrogenase (Complex I) that is believed to belong to the minimal assembly required for catalysis. Complex I functions in the transfer of electrons from NADH to the respiratory chain. The immediate electron acceptor for the enzyme is believed to be ubiquinone. This is NADH-ubiquinone oxidoreductase chain 2 (ND2) from Apis mellifera ligustica (Common honeybee).